We begin with the raw amino-acid sequence, 298 residues long: tRNA dimethylallyltransferase 2 (298 aa).

19–26 is an ATP binding site; it reads GATATGKT. 21-26 is a substrate binding site; sequence TATGKT. Residues 44-47 form an interaction with substrate tRNA region; the sequence is DSRQ.

Belongs to the IPP transferase family. Monomer. It depends on Mg(2+) as a cofactor.

It catalyses the reaction adenosine(37) in tRNA + dimethylallyl diphosphate = N(6)-dimethylallyladenosine(37) in tRNA + diphosphate. In terms of biological role, catalyzes the transfer of a dimethylallyl group onto the adenine at position 37 in tRNAs that read codons beginning with uridine, leading to the formation of N6-(dimethylallyl)adenosine (i(6)A). In Treponema denticola (strain ATCC 35405 / DSM 14222 / CIP 103919 / JCM 8153 / KCTC 15104), this protein is tRNA dimethylallyltransferase 2.